The sequence spans 2352 residues: Ectopic P granules protein 5 (2352 aa).

Disordered regions lie at residues 1 to 112 and 1315 to 1335; these read MAEL…IFPR and KNRE…SSAK. Residues 66-81 show a composition bias toward basic and acidic residues; that stretch reads DSLKREEASEPLKDVR.

This sequence belongs to the EPG5 family. As to expression, expressed in pharyngeal and body wall muscles and intestine cells.

The protein resides in the cytoplasm. The protein localises to the cytoplasmic vesicle. Its subcellular location is the phagosome membrane. In terms of biological role, involved in the maturation of autophagosomes into autolysosomes during starvation-induced autotrophy. Specifically, involved in the clearance of apoptotic cells by promoting the delivery of engulfed apoptotic cells to the lysosome. The chain is Ectopic P granules protein 5 from Caenorhabditis elegans.